Here is a 330-residue protein sequence, read N- to C-terminus: Aspartate--ammonia ligase (330 aa).

This sequence belongs to the class-II aminoacyl-tRNA synthetase family. AsnA subfamily.

It is found in the cytoplasm. The catalysed reaction is L-aspartate + NH4(+) + ATP = L-asparagine + AMP + diphosphate + H(+). It participates in amino-acid biosynthesis; L-asparagine biosynthesis; L-asparagine from L-aspartate (ammonia route): step 1/1. In Shigella dysenteriae serotype 1 (strain Sd197), this protein is Aspartate--ammonia ligase.